Reading from the N-terminus, the 282-residue chain is MSSSKSLDWADDEDYGTGLPSIQTFDNPDGTKTMIEFRIDDNGKKVKVTRVIRKTVITERVQHAVAERKKWKKFGKEAGKNSGVDARTTSVGENVQLRLQLGWTTTKEEEQDEAALAAAKVKAKGSSVVRCRACKGNHFTAQCPYKSIIGPVDEPPLDASPVSSRASGALGEKGRYIAPHLRAGSGRESGDSMFKRERDDSATLRVTNLSDDTREEELRDLFRRFGGIQRVYLAKDKETGRAKGFAFVSYYDRDCAIKARDRLDGYGWNNLILRCEFSKPRD.

The segment at 1–27 is disordered; that stretch reads MSSSKSLDWADDEDYGTGLPSIQTFDN. Phosphoserine occurs at positions 160 and 164. In terms of domain architecture, RRM spans 202 to 280; sequence ATLRVTNLSD…LILRCEFSKP (79 aa).

It belongs to the eIF-3 subunit G family. In terms of assembly, component of the eukaryotic translation initiation factor 3 (eIF-3) complex. The eIF-3 complex appears to include tif32/eif3a, SPAC25G10.08/eif3b, tif33/eif3c, SPBC4C3.07/eif3f, tif35/eif3g and sum1/eif3i. This set of common subunits may also associate exclusively with either moe1/eif3d and int6/eif3e, or with SPAC821.05/eif3h and SPAC1751.03/eif3m. The eIF-3 complex may also include SPAC3A12.13c/eif3j.

Its subcellular location is the cytoplasm. RNA-binding component of the eukaryotic translation initiation factor 3 (eIF-3) complex, which is involved in protein synthesis of a specialized repertoire of mRNAs and, together with other initiation factors, stimulates binding of mRNA and methionyl-tRNAi to the 40S ribosome. The eIF-3 complex specifically targets and initiates translation of a subset of mRNAs involved in cell proliferation. This subunit can bind 18S rRNA. The protein is Eukaryotic translation initiation factor 3 subunit G (tif35) of Schizosaccharomyces pombe (strain 972 / ATCC 24843) (Fission yeast).